A 315-amino-acid polypeptide reads, in one-letter code: MNEIRTQVQFIDIDEDMAGQRIDNFLRNQLKNIPKSVVYRILRKGEVRVNKKRVKAEYKLEAGDVVRVPPVTVEVKENEPAPPSTKLSKVAELEHCIVYEDDHLLILNKPSGTAVHGGSGLHFGAIEALRALRPQARFLELVHRIDRDTSGILLVAKKRSALRHLQAQFREKTVQKYYYALVMGHWDAECKVVNAPLLKNEVNSIVRVNPNGKPSETRFRILEKFAEATLVQASPVTGRTHQIRVHTQYMGHPIAWDDRYGDRRFDAYTAQFGIERLFLHAANIQFVHPASEKKLEIHAPLEAHLEQALTKMRQA.

Positions 20–94 (QRIDNFLRNQ…TKLSKVAELE (75 aa)) constitute an S4 RNA-binding domain. Residue Asp-146 is part of the active site.

The protein belongs to the pseudouridine synthase RluA family.

It catalyses the reaction uridine(955/2504/2580) in 23S rRNA = pseudouridine(955/2504/2580) in 23S rRNA. Its function is as follows. Responsible for synthesis of pseudouridine from uracil at positions 955, 2504 and 2580 in 23S ribosomal RNA. The protein is Ribosomal large subunit pseudouridine synthase C (rluC) of Vibrio cholerae serotype O1 (strain ATCC 39315 / El Tor Inaba N16961).